The primary structure comprises 1373 residues: DNA-directed RNA polymerase subunit beta (1373 aa).

The protein belongs to the RNA polymerase beta chain family. The RNAP catalytic core consists of 2 alpha, 1 beta, 1 beta' and 1 omega subunit. When a sigma factor is associated with the core the holoenzyme is formed, which can initiate transcription.

It carries out the reaction RNA(n) + a ribonucleoside 5'-triphosphate = RNA(n+1) + diphosphate. DNA-dependent RNA polymerase catalyzes the transcription of DNA into RNA using the four ribonucleoside triphosphates as substrates. The protein is DNA-directed RNA polymerase subunit beta of Rickettsia peacockii (strain Rustic).